Reading from the N-terminus, the 235-residue chain is Small ribosomal subunit protein uS2 (235 aa).

The protein belongs to the universal ribosomal protein uS2 family.

The protein is Small ribosomal subunit protein uS2 (rpsB) of Geobacillus stearothermophilus (Bacillus stearothermophilus).